Here is a 1829-residue protein sequence, read N- to C-terminus: Iron-regulated protein FrpC (1829 aa).

Hemolysin-type calcium-binding repeat units follow at residues 869-886 (FGHN…NDTL), 887-904 (IGGA…SDTY), 1015-1032 (NGGL…DDLL), 1033-1050 (NGDA…NDTL), 1051-1068 (NGGE…NDAL), 1069-1086 (NGGE…NDTL), 1087-1104 (IGGA…SDTY), 1215-1232 (NGGL…DDLL), 1233-1250 (NGDA…NDTL), 1251-1268 (DGGE…NDAL), 1269-1286 (NGGE…NDTL), 1287-1304 (IGGA…SDTY), 1415-1432 (NGGL…DDLL), 1433-1450 (NGDA…NDTL), 1451-1468 (DGGE…NDAL), 1469-1486 (NGGE…NDTL), 1487-1504 (IGGA…SDTY), 1615-1632 (NGGL…DDLL), 1633-1650 (NGDA…NDTL), 1651-1668 (NGGE…NDVL), 1669-1686 (NGGE…NDTL), and 1687-1704 (IGGA…SDTY).

Belongs to the RTX prokaryotic toxin (TC 1.C.11) family.

Its subcellular location is the cell outer membrane. The protein resides in the secreted. In terms of biological role, may participate in the pathogenesis of meningococcal disease. This chain is Iron-regulated protein FrpC (frpC), found in Neisseria meningitidis serogroup C.